A 193-amino-acid chain; its full sequence is Ion-translocating oxidoreductase complex subunit B (193 aa).

The interval 1–26 (MSTMLIAVILLTLLALFFGVLLGFAA) is hydrophobic. Residues 32 to 90 (EGNPIVDELEAILPQTQCGQCGYPGCRPYAEAIANGDKVNKCPPGGTATMEKLASLMGV) form the 4Fe-4S domain. 12 residues coordinate [4Fe-4S] cluster: Cys-49, Cys-52, Cys-57, Cys-73, Cys-114, Cys-117, Cys-120, Cys-124, Cys-144, Cys-147, Cys-150, and Cys-154. 2 consecutive 4Fe-4S ferredoxin-type domains span residues 105 to 134 (KVAY…GAGK) and 136 to 164 (MHTV…MLPV).

It belongs to the 4Fe4S bacterial-type ferredoxin family. RnfB subfamily. The complex is composed of six subunits: RnfA, RnfB, RnfC, RnfD, RnfE and RnfG. It depends on [4Fe-4S] cluster as a cofactor.

The protein localises to the cell inner membrane. Its function is as follows. Part of a membrane-bound complex that couples electron transfer with translocation of ions across the membrane. This is Ion-translocating oxidoreductase complex subunit B from Shewanella sp. (strain MR-4).